The sequence spans 609 residues: Alpha-fetoprotein (609 aa).

The first 18 residues, 1–18 (MKWVESIFLIFLLNFTES), serve as a signal peptide directing secretion. 3 Albumin domains span residues 19–210 (RTLH…ATVT), 211–402 (KELR…EELQ), and 403–601 (KYIQ…KLIS). Histidine 22 provides a ligand contact to Cu(2+). 8 cysteine pairs are disulfide-bonded: cysteine 99-cysteine 114, cysteine 113-cysteine 124, cysteine 148-cysteine 193, cysteine 192-cysteine 201, cysteine 224-cysteine 270, cysteine 269-cysteine 277, cysteine 289-cysteine 303, and cysteine 302-cysteine 313. Phosphoserine is present on residues serine 111, serine 115, and serine 117. An N-linked (GlcNAc...) asparagine glycan is attached at asparagine 251. Position 344 is a phosphoserine (serine 344). 7 cysteine pairs are disulfide-bonded: cysteine 384–cysteine 393, cysteine 416–cysteine 462, cysteine 461–cysteine 472, cysteine 485–cysteine 501, cysteine 500–cysteine 511, cysteine 538–cysteine 583, and cysteine 582–cysteine 591. The residue at position 444 (serine 444) is a Phosphoserine.

This sequence belongs to the ALB/AFP/VDB family. In terms of assembly, dimeric and trimeric forms have been found in addition to the monomeric form. Post-translationally, sulfated. In terms of tissue distribution, plasma.

The protein resides in the secreted. In terms of biological role, binds copper, nickel, and fatty acids as well as, and bilirubin less well than, serum albumin. The sequence is that of Alpha-fetoprotein (AFP) from Gorilla gorilla gorilla (Western lowland gorilla).